The sequence spans 313 residues: Porphobilinogen deaminase (313 aa).

C242 carries the post-translational modification S-(dipyrrolylmethanemethyl)cysteine.

Belongs to the HMBS family. Monomer. The cofactor is dipyrromethane.

The catalysed reaction is 4 porphobilinogen + H2O = hydroxymethylbilane + 4 NH4(+). It functions in the pathway porphyrin-containing compound metabolism; protoporphyrin-IX biosynthesis; coproporphyrinogen-III from 5-aminolevulinate: step 2/4. Its function is as follows. Tetrapolymerization of the monopyrrole PBG into the hydroxymethylbilane pre-uroporphyrinogen in several discrete steps. The sequence is that of Porphobilinogen deaminase from Escherichia coli (strain SE11).